A 403-amino-acid polypeptide reads, in one-letter code: MSSYLFTSESVSEGHPDKVADQISDAVLDAILTQDQRARVACETMVKTGVAIVAGEITTSAWIDLEALTRKVIVDIGYDSSDVGFDGATCGVLNLIGKQSPHIAQGVDRKKPEEMGAGDQGLMFGYATNETDSYMPAAIHLSHRLVEQQAKIRKKKNSPLSWLRPDAKSQVTLRYENGVVSAIDAVVLSTQHAPGIKQKDLIEAVREEIIKPVLPAKWLHKGTKFHINPTGKFEIGGPVGDCGLTGRKIIVDTYGGWARHGGGAFSGKDPSKVDRSAAYAARYVAKNVVAAGLADRCEVQVSYAIGVAEPTSISVTTFGTGKISDDKIEKLIRKHFDLRPYGIIKMLDLVHPMYQQTAAYGHFGRKPKEFSYLNGEGETVNATAFSWEKTDRAAALRADAKLK.

ATP is bound at residue H15. Residue D17 coordinates Mg(2+). E43 is a binding site for K(+). L-methionine-binding residues include E56 and Q99. Residues 99–109 are flexible loop; sequence QSPHIAQGVDR. Residues 166–168, 232–233, D241, 247–248, A264, and K268 each bind ATP; these read DAK, KF, and RK. D241 serves as a coordination point for L-methionine. Residue K272 participates in L-methionine binding.

It belongs to the AdoMet synthase family. As to quaternary structure, homotetramer; dimer of dimers. Mg(2+) serves as cofactor. Requires K(+) as cofactor.

It localises to the cytoplasm. The catalysed reaction is L-methionine + ATP + H2O = S-adenosyl-L-methionine + phosphate + diphosphate. It functions in the pathway amino-acid biosynthesis; S-adenosyl-L-methionine biosynthesis; S-adenosyl-L-methionine from L-methionine: step 1/1. Catalyzes the formation of S-adenosylmethionine (AdoMet) from methionine and ATP. The overall synthetic reaction is composed of two sequential steps, AdoMet formation and the subsequent tripolyphosphate hydrolysis which occurs prior to release of AdoMet from the enzyme. The sequence is that of S-adenosylmethionine synthase from Stenotrophomonas maltophilia (strain R551-3).